The sequence spans 274 residues: 4-deoxy-L-threo-5-hexosulose-uronate ketol-isomerase (274 aa).

Positions 192, 194, 199, and 241 each coordinate Zn(2+).

It belongs to the KduI family. Zn(2+) serves as cofactor.

It carries out the reaction 5-dehydro-4-deoxy-D-glucuronate = 3-deoxy-D-glycero-2,5-hexodiulosonate. The protein operates within glycan metabolism; pectin degradation; 2-dehydro-3-deoxy-D-gluconate from pectin: step 4/5. Functionally, catalyzes the isomerization of 5-dehydro-4-deoxy-D-glucuronate to 3-deoxy-D-glycero-2,5-hexodiulosonate. This is 4-deoxy-L-threo-5-hexosulose-uronate ketol-isomerase from Cereibacter sphaeroides (strain ATCC 17029 / ATH 2.4.9) (Rhodobacter sphaeroides).